A 1394-amino-acid chain; its full sequence is ABC transporter patM (1394 aa).

Positions 1-41 (MVDNYHSSLDVAKTPIQSDADAQKSEAETEGPSSKSSQIAA) are disordered. The ABC transporter 1 domain occupies 98–341 (SPLQNRQRKQ…FEDLGFECLS (244 aa)). The next 6 helical transmembrane spans lie at 437–457 (SLWA…GTLF), 467–487 (LFIF…QSMA), 511–531 (IAYA…AICY), 546–566 (GNFF…SMFF), 579–599 (AVLP…LYVP), and 688–708 (VGIN…GMEM). The interval 727–755 (VTHRRDKIDSETGQDQGNESSEMSAGQSN) is disordered. Positions 737–755 (ETGQDQGNESSEMSAGQSN) are enriched in polar residues. One can recognise an ABC transporter 2 domain in the interval 767 to 1013 (DKSHNLAWTN…EAIQYFQPRS (247 aa)). 808–815 (GVSGAGKT) contributes to the ATP binding site. The next 6 membrane-spanning stretches (helical) occupy residues 1131-1151 (GAYN…PLGL), 1177-1197 (LAFV…SSLV), 1219-1239 (FLMY…CASL), 1245-1265 (AAFA…GTLS), 1280-1300 (ISPL…DLPI), and 1368-1388 (IGVF…MTYL).

It belongs to the ABC transporter superfamily. ABCG family. PDR (TC 3.A.1.205) subfamily.

The protein localises to the vacuole membrane. Its subcellular location is the cell membrane. It functions in the pathway mycotoxin biosynthesis; patulin biosynthesis. Functionally, ABC transporter; part of the gene cluster that mediates the biosynthesis of patulin, an acetate-derived tetraketide mycotoxin produced by several fungal species that shows antimicrobial properties against several bacteria. May be involved in the secretion of E-ascladiol to be converted to patulin by the secreted patulin synthase patE. This Penicillium expansum (Blue mold rot fungus) protein is ABC transporter patM.